A 329-amino-acid polypeptide reads, in one-letter code: GTPase Obg (329 aa).

The Obg domain occupies 1-159 (MQFIDQACIS…WLLHLELKLL (159 aa)). One can recognise an OBG-type G domain in the interval 160 to 328 (AEVGIIGLPN…LLKNVWEKLE (169 aa)). ATP is bound by residues 166 to 173 (GLPNAGKS), 191 to 195 (FTTLI), 213 to 216 (DIPG), 280 to 283 (NKKE), and 309 to 311 (SAA). Residues Ser173 and Thr193 each contribute to the Mg(2+) site.

It belongs to the TRAFAC class OBG-HflX-like GTPase superfamily. OBG GTPase family. Monomer. The cofactor is Mg(2+).

The protein localises to the cytoplasm. In terms of biological role, an essential GTPase which binds GTP, GDP and possibly (p)ppGpp with moderate affinity, with high nucleotide exchange rates and a fairly low GTP hydrolysis rate. Plays a role in control of the cell cycle, stress response, ribosome biogenesis and in those bacteria that undergo differentiation, in morphogenesis control. This Prochlorococcus marinus (strain MIT 9211) protein is GTPase Obg.